The primary structure comprises 187 residues: UPF0340 protein SPP_0683 (187 aa).

This sequence belongs to the UPF0340 family.

This is UPF0340 protein SPP_0683 from Streptococcus pneumoniae (strain P1031).